A 139-amino-acid chain; its full sequence is Membrane protein YqfB (139 aa).

The chain crosses the membrane as a helical span at residues 3-23 (DLLTNPLIIAAIIGIISAIFG). The tract at residues 25 to 87 (KSKEEKQNSQ…TARNLKGLER (63 aa)) is disordered. A coiled-coil region spans residues 62-97 (NRMEQARREAEERRRETARNLKGLERDLAAAKQKTV). Basic and acidic residues predominate over residues 65-87 (EQARREAEERRRETARNLKGLER).

It is found in the cell membrane. In Bacillus subtilis (strain 168), this protein is Membrane protein YqfB (yqfB).